The sequence spans 244 residues: Chlorosome protein I (244 aa).

A 2Fe-2S ferredoxin-type domain is found at 1–95 (MNLIINDKTA…TVKVLSRPEE (95 aa)). [2Fe-2S] cluster contacts are provided by cysteine 33, cysteine 39, cysteine 42, and cysteine 77.

It depends on [2Fe-2S] cluster as a cofactor.

It localises to the chlorosome. Could play a direct role in the oxidation or reduction of the quenching species formed in the chlorosome. The protein is Chlorosome protein I (csmI) of Chlorobaculum tepidum (strain ATCC 49652 / DSM 12025 / NBRC 103806 / TLS) (Chlorobium tepidum).